We begin with the raw amino-acid sequence, 76 residues long: Small ribosomal subunit protein bS18 (76 aa).

Belongs to the bacterial ribosomal protein bS18 family. Part of the 30S ribosomal subunit. Forms a tight heterodimer with protein bS6.

Binds as a heterodimer with protein bS6 to the central domain of the 16S rRNA, where it helps stabilize the platform of the 30S subunit. The protein is Small ribosomal subunit protein bS18 of Pseudomonas entomophila (strain L48).